A 123-amino-acid polypeptide reads, in one-letter code: Small ribosomal subunit protein uS12 (123 aa).

A 3-methylthioaspartic acid modification is found at aspartate 89.

It belongs to the universal ribosomal protein uS12 family. Part of the 30S ribosomal subunit. Contacts proteins S8 and S17. May interact with IF1 in the 30S initiation complex.

With S4 and S5 plays an important role in translational accuracy. In terms of biological role, interacts with and stabilizes bases of the 16S rRNA that are involved in tRNA selection in the A site and with the mRNA backbone. Located at the interface of the 30S and 50S subunits, it traverses the body of the 30S subunit contacting proteins on the other side and probably holding the rRNA structure together. The combined cluster of proteins S8, S12 and S17 appears to hold together the shoulder and platform of the 30S subunit. In Gluconacetobacter diazotrophicus (strain ATCC 49037 / DSM 5601 / CCUG 37298 / CIP 103539 / LMG 7603 / PAl5), this protein is Small ribosomal subunit protein uS12.